A 295-amino-acid chain; its full sequence is Light-independent protochlorophyllide reductase iron-sulfur ATP-binding protein (295 aa).

ATP contacts are provided by residues 39–44 (GIGKST) and Lys-68. Mg(2+) is bound at residue Ser-43. Cys-124 and Cys-158 together coordinate [4Fe-4S] cluster. Position 209–210 (209–210 (NR)) interacts with ATP.

The protein belongs to the NifH/BchL/ChlL family. As to quaternary structure, homodimer. Protochlorophyllide reductase is composed of three subunits; ChlL, ChlN and ChlB. It depends on [4Fe-4S] cluster as a cofactor.

The catalysed reaction is chlorophyllide a + oxidized 2[4Fe-4S]-[ferredoxin] + 2 ADP + 2 phosphate = protochlorophyllide a + reduced 2[4Fe-4S]-[ferredoxin] + 2 ATP + 2 H2O. The protein operates within porphyrin-containing compound metabolism; chlorophyll biosynthesis (light-independent). Functionally, component of the dark-operative protochlorophyllide reductase (DPOR) that uses Mg-ATP and reduced ferredoxin to reduce ring D of protochlorophyllide (Pchlide) to form chlorophyllide a (Chlide). This reaction is light-independent. The L component serves as a unique electron donor to the NB-component of the complex, and binds Mg-ATP. The protein is Light-independent protochlorophyllide reductase iron-sulfur ATP-binding protein of Prochlorococcus marinus (strain AS9601).